A 371-amino-acid chain; its full sequence is MKKSNKLLDNKKLSFYNSVNNHILVLFGLISITCVFSDFYYKTSNLTIPFIITTLVSSIITFIGIPKLKKIKIKQIIRDEGPKNHFLKQGTPTMGGIFFIPIGIIVSNILYFNQENYNIILTLSFVIIFFMFIGFIDDFLSLKKKLNTGLSSNQKILLQSLISLIFILICASNNLIPQNIQIANKVFNIGNLIYPLGIFVLLAESNSTNLTDGLDGLLSGCSVLIFTGLAISILIENPSNNSTLAPLCIAMAGACMGFLFLNKYPAKLFMGDSGSLAIGASLGGIALISNHLWSLLIMGGILAAESISVIIQVSIFKISKRVKGKGHKLFLMTPLHHHFELKGNNESLIVSSFWLITLFLVIINLIFLIKS.

The next 11 membrane-spanning stretches (helical) occupy residues 21 to 41 (NHIL…DFYY), 46 to 66 (LTIP…IGIP), 92 to 112 (PTMG…ILYF), 119 to 139 (IILT…IDDF), 156 to 176 (ILLQ…NNLI), 182 to 202 (IANK…FVLL), 216 to 236 (GLLS…ILIE), 241 to 261 (NSTL…FLFL), 268 to 288 (LFMG…IALI), 296 to 316 (LIMG…VSIF), and 349 to 369 (IVSS…IFLI).

This sequence belongs to the glycosyltransferase 4 family. MraY subfamily. Requires Mg(2+) as cofactor.

The protein resides in the cell inner membrane. It catalyses the reaction UDP-N-acetyl-alpha-D-muramoyl-L-alanyl-gamma-D-glutamyl-meso-2,6-diaminopimeloyl-D-alanyl-D-alanine + di-trans,octa-cis-undecaprenyl phosphate = di-trans,octa-cis-undecaprenyl diphospho-N-acetyl-alpha-D-muramoyl-L-alanyl-D-glutamyl-meso-2,6-diaminopimeloyl-D-alanyl-D-alanine + UMP. It participates in cell wall biogenesis; peptidoglycan biosynthesis. Its function is as follows. Catalyzes the initial step of the lipid cycle reactions in the biosynthesis of the cell wall peptidoglycan: transfers peptidoglycan precursor phospho-MurNAc-pentapeptide from UDP-MurNAc-pentapeptide onto the lipid carrier undecaprenyl phosphate, yielding undecaprenyl-pyrophosphoryl-MurNAc-pentapeptide, known as lipid I. The chain is Phospho-N-acetylmuramoyl-pentapeptide-transferase from Prochlorococcus marinus (strain NATL2A).